A 559-amino-acid polypeptide reads, in one-letter code: Formate--tetrahydrofolate ligase (559 aa).

68–75 (TPAGEGKT) is a binding site for ATP.

Belongs to the formate--tetrahydrofolate ligase family.

It catalyses the reaction (6S)-5,6,7,8-tetrahydrofolate + formate + ATP = (6R)-10-formyltetrahydrofolate + ADP + phosphate. The protein operates within one-carbon metabolism; tetrahydrofolate interconversion. This chain is Formate--tetrahydrofolate ligase, found in Rhizobium rhizogenes (strain K84 / ATCC BAA-868) (Agrobacterium radiobacter).